A 271-amino-acid polypeptide reads, in one-letter code: Acetyl-coenzyme A carboxylase carboxyl transferase subunit beta (271 aa).

A CoA carboxyltransferase N-terminal domain is found at 21–271 (LWIQCPYCKQ…LGDLLALHTA (251 aa)). Zn(2+)-binding residues include Cys25, Cys28, Cys43, and Cys46. The C4-type zinc finger occupies 25–46 (CPYCKQGSYRESLGNAQVCPHC).

Belongs to the AccD/PCCB family. Acetyl-CoA carboxylase is a heterohexamer composed of biotin carboxyl carrier protein (AccB), biotin carboxylase (AccC) and two subunits each of ACCase subunit alpha (AccA) and ACCase subunit beta (AccD). Requires Zn(2+) as cofactor.

It is found in the cytoplasm. The enzyme catalyses N(6)-carboxybiotinyl-L-lysyl-[protein] + acetyl-CoA = N(6)-biotinyl-L-lysyl-[protein] + malonyl-CoA. Its pathway is lipid metabolism; malonyl-CoA biosynthesis; malonyl-CoA from acetyl-CoA: step 1/1. Functionally, component of the acetyl coenzyme A carboxylase (ACC) complex. Biotin carboxylase (BC) catalyzes the carboxylation of biotin on its carrier protein (BCCP) and then the CO(2) group is transferred by the transcarboxylase to acetyl-CoA to form malonyl-CoA. This Lacticaseibacillus paracasei (strain ATCC 334 / BCRC 17002 / CCUG 31169 / CIP 107868 / KCTC 3260 / NRRL B-441) (Lactobacillus paracasei) protein is Acetyl-coenzyme A carboxylase carboxyl transferase subunit beta.